Here is a 554-residue protein sequence, read N- to C-terminus: Arginine--tRNA ligase (554 aa).

A 'HIGH' region motif is present at residues 132–142; that stretch reads ANPTGPLHIGH.

The protein belongs to the class-I aminoacyl-tRNA synthetase family. In terms of assembly, monomer.

Its subcellular location is the cytoplasm. The catalysed reaction is tRNA(Arg) + L-arginine + ATP = L-arginyl-tRNA(Arg) + AMP + diphosphate. This is Arginine--tRNA ligase from Pseudarthrobacter chlorophenolicus (strain ATCC 700700 / DSM 12829 / CIP 107037 / JCM 12360 / KCTC 9906 / NCIMB 13794 / A6) (Arthrobacter chlorophenolicus).